A 370-amino-acid chain; its full sequence is ADP-ribosylhydrolase ARH3 (370 aa).

Glu-47 is a Mg(2+) binding site. Thr-70 carries the phosphothreonine modification. Residues Thr-82, Asp-83, and Asp-84 each coordinate Mg(2+). A substrate-binding site is contributed by Asp-83. Substrate is bound by residues Lys-152 to Gly-158, His-188, Leu-241, and Ile-277. The Mg(2+) site is built by Asp-320, Asp-322, and Thr-323.

It belongs to the ADP-ribosylglycohydrolase family. In terms of assembly, monomer. Mg(2+) serves as cofactor. In terms of tissue distribution, ubiquitous.

Its subcellular location is the nucleus. It is found in the cytoplasm. It localises to the chromosome. The protein localises to the mitochondrion matrix. It catalyses the reaction [(1''-&gt;2')-ADP-alpha-D-ribose](n) + H2O = [(1''-&gt;2')-ADP-alpha-D-ribose](n-1) + ADP-D-ribose. The catalysed reaction is 1''-O-acetyl-ADP-alpha-D-ribose + H2O = ADP-D-ribose + acetate + H(+). It carries out the reaction O-(ADP-D-ribosyl)-L-seryl-[protein] + H2O = ADP-D-ribose + L-seryl-[protein]. The enzyme catalyses alpha-NAD(+) + H2O = ADP-D-ribose + nicotinamide + H(+). The protein undergoes a dramatic conformational switch from closed to open states upon substrate-binding, which enables specific substrate recognition for the 1''-O-linkage. The glutamate flap (Glu-47) blocks substrate entrance to Mg(2+) in the unliganded closed state. In presence of substrate, Glu-47 is ejected from the active site: this closed-to-open transition significantly widens the substrate-binding channel and precisely positions the scissile 1''-O-linkage for cleavage while securing tightly 2'- and 3'-hydroxyls of ADP-ribose. Functionally, ADP-ribosylhydrolase that preferentially hydrolyzes the scissile alpha-O-linkage attached to the anomeric C1'' position of ADP-ribose and acts on different substrates, such as proteins ADP-ribosylated on serine and threonine, free poly(ADP-ribose) and O-acetyl-ADP-D-ribose. Specifically acts as a serine mono-ADP-ribosylhydrolase by mediating the removal of mono-ADP-ribose attached to serine residues on proteins, thereby playing a key role in DNA damage response. Serine ADP-ribosylation of proteins constitutes the primary form of ADP-ribosylation of proteins in response to DNA damage. Does not hydrolyze ADP-ribosyl-arginine, -cysteine, -diphthamide, or -asparagine bonds. Also able to degrade protein free poly(ADP-ribose), which is synthesized in response to DNA damage: free poly(ADP-ribose) acts as a potent cell death signal and its degradation by ADPRHL2 protects cells from poly(ADP-ribose)-dependent cell death, a process named parthanatos. Also hydrolyzes free poly(ADP-ribose) in mitochondria. Specifically digests O-acetyl-ADP-D-ribose, a product of deacetylation reactions catalyzed by sirtuins. Specifically degrades 1''-O-acetyl-ADP-D-ribose isomer, rather than 2''-O-acetyl-ADP-D-ribose or 3''-O-acetyl-ADP-D-ribose isomers. The sequence is that of ADP-ribosylhydrolase ARH3 (Adprs) from Mus musculus (Mouse).